Consider the following 228-residue polypeptide: MSEEPVAAPGTISHPVYKLKRNWTWWYLNDERNKSWEERLKNVKTFSSVGEFWALHDSIKPPSGLNPPSDYNVFRDGIEPMWEVPQNQNGGRWLITIEKGRTPEIMDTIWTEILMAMIGEQFSDDIESLCGIVCNVRGKGSKISVWTTNSADDGANLRIGGVLKQVLNNASMIHQRPLYDVLRYEDHESCQKKTSSGVKAKHAIYAVEPREEKAPVPVSTETPATPAT.

Cysteines 130 and 134 form a disulfide.

The protein belongs to the eukaryotic initiation factor 4E family. In terms of assembly, eIF4F is a multi-subunit complex, the composition of which varies with external and internal environmental conditions. It is composed of at least eIF4A, eIF4E and eIF4G. eIF4E is also known to interact with other partners. Highly expressed in all somatic tissues.

In terms of biological role, recognizes and binds the 7-methylguanosine-containing mRNA cap during an early step in the initiation of protein synthesis and facilitates ribosome binding by inducing the unwinding of the mRNAs secondary structures. All 5 eIF4E proteins bind monomethyl cap structures. Only ife-1, ife-2 and ife-5 bind trimethyl cap structures which result from trans-splicing. Translation of trimethyl cap structure mRNAs may be regulated by intracellular redox state; disulfide bonds change the width and depth of the cap-binding cavity determining selectivity to mRNA caps. Probably by regulating mRNA translation in somatic cells, negatively regulates lifespan independently of daf-2/insulin and let-363/TOR pathways. Negatively regulates resistance to oxidative stress. May play a role in embryonic development. In Caenorhabditis elegans, this protein is Eukaryotic translation initiation factor 4E-2 (ife-2).